The chain runs to 251 residues: Protein CMS1 (251 aa).

Residues 1–37 (MSLDNDINTKKRKLQDDEKPRKKRKHKRPTRDDDADL) are disordered.

It belongs to the CMS1 family.

Its subcellular location is the nucleus. Functionally, may play a role in the regulation of DNA replication and cell cycle control. The sequence is that of Protein CMS1 (CSM1) from Chaetomium thermophilum (strain DSM 1495 / CBS 144.50 / IMI 039719) (Thermochaetoides thermophila).